Consider the following 249-residue polypeptide: ATP-dependent Clp protease proteolytic subunit (249 aa).

The active-site Nucleophile is serine 107. The active site involves histidine 132. The segment at 212-249 is disordered; that stretch reads ESASQDNSLDPDAPDESASQDNSLDPDAPDETRPPKLR.

The protein belongs to the peptidase S14 family. In terms of assembly, component of the chloroplastic Clp protease core complex.

It is found in the plastid. It localises to the chloroplast stroma. It catalyses the reaction Hydrolysis of proteins to small peptides in the presence of ATP and magnesium. alpha-casein is the usual test substrate. In the absence of ATP, only oligopeptides shorter than five residues are hydrolyzed (such as succinyl-Leu-Tyr-|-NHMec, and Leu-Tyr-Leu-|-Tyr-Trp, in which cleavage of the -Tyr-|-Leu- and -Tyr-|-Trp bonds also occurs).. Cleaves peptides in various proteins in a process that requires ATP hydrolysis. Has a chymotrypsin-like activity. Plays a major role in the degradation of misfolded proteins. The chain is ATP-dependent Clp protease proteolytic subunit from Oenothera elata subsp. hookeri (Hooker's evening primrose).